A 554-amino-acid chain; its full sequence is Undecaprenyl phosphate-alpha-4-amino-4-deoxy-L-arabinose arabinosyl transferase (554 aa).

11 consecutive transmembrane segments (helical) span residues L4–V24, F87–L107, V115–V135, F178–I198, L206–L226, Y262–F282, E293–G313, L315–T335, V351–L371, Q384–L404, and A414–V434.

It belongs to the glycosyltransferase 83 family.

Its subcellular location is the cell inner membrane. The catalysed reaction is 4-amino-4-deoxy-alpha-L-arabinopyranosyl di-trans,octa-cis-undecaprenyl phosphate + lipid IVA = lipid IIA + di-trans,octa-cis-undecaprenyl phosphate.. Its pathway is lipopolysaccharide metabolism; 4-amino-4-deoxy-beta-L-arabinose-lipid A biosynthesis. In terms of biological role, catalyzes the transfer of the L-Ara4N moiety of the glycolipid undecaprenyl phosphate-alpha-L-Ara4N to lipid A. The modified arabinose is attached to lipid A and is required for resistance to polymyxin and cationic antimicrobial peptides. This Yersinia pseudotuberculosis serotype O:1b (strain IP 31758) protein is Undecaprenyl phosphate-alpha-4-amino-4-deoxy-L-arabinose arabinosyl transferase.